The following is a 544-amino-acid chain: Chaperonin GroEL (544 aa).

Residues Thr-30 to Pro-33, Lys-51, Asp-87 to Thr-91, Gly-415, and Asp-495 each bind ATP.

Belongs to the chaperonin (HSP60) family. Forms a cylinder of 14 subunits composed of two heptameric rings stacked back-to-back. Interacts with the co-chaperonin GroES.

The protein localises to the cytoplasm. It catalyses the reaction ATP + H2O + a folded polypeptide = ADP + phosphate + an unfolded polypeptide.. Functionally, together with its co-chaperonin GroES, plays an essential role in assisting protein folding. The GroEL-GroES system forms a nano-cage that allows encapsulation of the non-native substrate proteins and provides a physical environment optimized to promote and accelerate protein folding. This chain is Chaperonin GroEL, found in Neisseria gonorrhoeae (strain ATCC 700825 / FA 1090).